The chain runs to 433 residues: MGIIDEAKRGQITDEMRAISKLEGIPVEKVRNRISEGKIMLIRNAKYPSRKLVPIGKGLTTKVNVNIGTSSEVVDLDMELQKVKVANKWGDTLMDLSTGGDLDAIRRDIIKASDLPVGTVPVYQIFIESFKKKSGGAYFTEDELLNTVEKHLKDGVAFMTIHAGITKDLAIRALKSDRIIPIVSRGGDMIAGWMIHNNSENPYRKNWDYVLEMFKEYDAVISLGDALRPGATGDAHDEFQIGELLETARLVKNALQKGVQVMVEGPGHVPLNEIAWDVKLMKKLTGGVPYYVLGPLPIDVGAPYDHIASAIGAAISSASGVDLLCYLTPAEHLGLPTVKQVEEGAIAYRVAAHAGDVVKLGRKARKWDDEVSYYRGKLDWENMISKLIDPQRAYQVYTQFGTPKVKACTMCGGYCPMMWAMDQVRKIGSSSSL.

Residues asparagine 66, methionine 94, tyrosine 123, histidine 162, 184-186 (SRG), 225-228 (DALR), and glutamate 264 contribute to the substrate site. Residue histidine 268 participates in Zn(2+) binding. Substrate is bound at residue tyrosine 291. Histidine 332 contributes to the Zn(2+) binding site. [4Fe-4S] cluster contacts are provided by cysteine 408, cysteine 411, and cysteine 415.

Belongs to the ThiC family. [4Fe-4S] cluster is required as a cofactor.

The catalysed reaction is 5-amino-1-(5-phospho-beta-D-ribosyl)imidazole + S-adenosyl-L-methionine = 4-amino-2-methyl-5-(phosphooxymethyl)pyrimidine + CO + 5'-deoxyadenosine + formate + L-methionine + 3 H(+). It functions in the pathway cofactor biosynthesis; thiamine diphosphate biosynthesis. Its function is as follows. Catalyzes the synthesis of the hydroxymethylpyrimidine phosphate (HMP-P) moiety of thiamine from aminoimidazole ribotide (AIR) in a radical S-adenosyl-L-methionine (SAM)-dependent reaction. This chain is Phosphomethylpyrimidine synthase, found in Saccharolobus islandicus (strain M.16.27) (Sulfolobus islandicus).